A 311-amino-acid chain; its full sequence is Porphobilinogen deaminase (311 aa).

Cysteine 243 carries the S-(dipyrrolylmethanemethyl)cysteine modification.

It belongs to the HMBS family. In terms of assembly, monomer. Requires dipyrromethane as cofactor.

The enzyme catalyses 4 porphobilinogen + H2O = hydroxymethylbilane + 4 NH4(+). Its pathway is porphyrin-containing compound metabolism; protoporphyrin-IX biosynthesis; coproporphyrinogen-III from 5-aminolevulinate: step 2/4. Tetrapolymerization of the monopyrrole PBG into the hydroxymethylbilane pre-uroporphyrinogen in several discrete steps. The polypeptide is Porphobilinogen deaminase (Aliivibrio fischeri (strain ATCC 700601 / ES114) (Vibrio fischeri)).